The chain runs to 533 residues: Protein disulfide isomerase-like 1-5 (533 aa).

An N-terminal signal peptide occupies residues 1 to 22 (MRARRVVAAAAVLLLFAVVAVA). 2 Thioredoxin domains span residues 51–196 (LGGG…KDQT) and 387–516 (LLEG…EKLQ). Catalysis depends on cysteine 97, which acts as the Nucleophile. Asparagine 151 carries an N-linked (GlcNAc...) asparagine glycan. Active-site nucleophile residues include cysteine 436 and cysteine 439. Cysteine 436 and cysteine 439 form a disulfide bridge. The Prevents secretion from ER signature appears at 530-533 (KDEL).

This sequence belongs to the protein disulfide isomerase family.

It is found in the endoplasmic reticulum lumen. It catalyses the reaction Catalyzes the rearrangement of -S-S- bonds in proteins.. In terms of biological role, acts as a protein-folding catalyst that interacts with nascent polypeptides to catalyze the formation, isomerization, and reduction or oxidation of disulfide bonds. May play a role in storage protein biogenesis. The chain is Protein disulfide isomerase-like 1-5 (PDIL1-5) from Oryza sativa subsp. japonica (Rice).